Here is a 217-residue protein sequence, read N- to C-terminus: MOB kinase activator 3A (217 aa).

Residues Cys83, Cys88, His165, and His170 each contribute to the Zn(2+) site.

Belongs to the MOB1/phocein family.

Its function is as follows. May regulate the activity of kinases. The sequence is that of MOB kinase activator 3A (MOB3A) from Pongo abelii (Sumatran orangutan).